The chain runs to 326 residues: Putative HTH-type transcriptional regulatory protein MMP0678 (326 aa).

An HTH cro/C1-type domain is found at 128 to 183 (LRETREKLKISVGELAEVSRVSRKTIYKYEQNEANPSAEVAIKIEEYLDVPLIKGI). Positions 139–158 (VGELAEVSRVSRKTIYKYEQ) form a DNA-binding region, H-T-H motif.

This chain is Putative HTH-type transcriptional regulatory protein MMP0678, found in Methanococcus maripaludis (strain DSM 14266 / JCM 13030 / NBRC 101832 / S2 / LL).